The sequence spans 789 residues: Disintegrin and metalloproteinase domain-containing protein 7 (789 aa).

The first 25 residues, 1-25, serve as a signal peptide directing secretion; it reads MFPTGIFLMSVLISQMQGRGIVGVE. Residues 26–176 constitute a propeptide that is removed on maturation; sequence GQELVHPKKL…NYSCEGLNFT (151 aa). N-linked (GlcNAc...) asparagine glycans are attached at residues N84, N167, and N174. The Extracellular portion of the chain corresponds to 177-668; the sequence is KKSTLIDAKI…WGEALNLTSV (492 aa). Residues 199–393 enclose the Peptidase M12B domain; sequence KFIELFVVAD…QKPACILNNP (195 aa). Disulfide bonds link C310-C388, C350-C372, C352-C357, and C459-C479. Residues 401 to 487 form the Disintegrin domain; it reads YPFCGNKKVD…ECPKDESQAN (87 aa). N-linked (GlcNAc...) asparagine glycosylation is found at N583, N628, and N664. The chain crosses the membrane as a helical span at residues 669–689; the sequence is SIMVVVLVMVIIGVGLVILLI. Residues 690 to 789 lie on the Cytoplasmic side of the membrane; it reads RYQKCIKMKQ…DSQSDCTRLG (100 aa). The segment covering 762–771 has biased composition (basic and acidic residues); that stretch reads DPRGIADPKQ. The segment at 762–789 is disordered; sequence DPRGIADPKQNDNMNLNLDSQSDCTRLG. Residues 772–789 are compositionally biased toward polar residues; sequence NDNMNLNLDSQSDCTRLG.

As to quaternary structure, interacts with ITM2B in sperm; the interaction increases following capacitation. Interacts with HSPA5 and CANX. In terms of tissue distribution, expressed specifically in the caput region of the epididymis (at protein level).

The protein resides in the membrane. Its function is as follows. Required for normal male fertility via maintenance of epithelial cell morphology in the caput epididymis and subsequently correct epididymis lumen structure required for sperm development. Plays a role in sperm motility, flagella morphology and tyrosine phosphorylation during sperm capacitance. Plays a role in normal expression levels of HSPA5, ITM2B and ADAM2 in sperm both prior to and post-capacitation. This is a non catalytic metalloprotease-like protein. In Rattus norvegicus (Rat), this protein is Disintegrin and metalloproteinase domain-containing protein 7.